Here is a 138-residue protein sequence, read N- to C-terminus: Putative thioredoxin-like protein 453L (138 aa).

The 136-residue stretch at 3–138 folds into the Thioredoxin domain; sequence QQKYFEKPVY…FNNIVNYVMG (136 aa). Catalysis depends on nucleophile residues cysteine 44 and cysteine 47. Cysteines 44 and 47 form a disulfide.

This sequence belongs to the thioredoxin family.

Functionally, participates in various redox reactions through the reversible oxidation of its active center dithiol to a disulfide and catalyzes dithiol-disulfide exchange reactions. This chain is Putative thioredoxin-like protein 453L, found in Acheta domesticus (House cricket).